A 261-amino-acid polypeptide reads, in one-letter code: Esterase citA (261 aa).

Residues Ser-122, Asp-207, and His-235 each act as charge relay system in the active site.

This sequence belongs to the LovG family.

The protein operates within mycotoxin biosynthesis. Functionally, non-reducing polyketide synthase; part of the gene cluster that mediates the biosynthesis of the mycotoxin citrinin, a hepato-nephrotoxic compound to humans due to inhibition of respiration complex III. The pathway begins with the synthesis of a keto-aldehyde intermediate by the citrinin PKS (pksCT also named citS) from successive condensations of 4 malonyl-CoA units, presumably with a simple acetyl-CoA starter unit. Release of the keto-aldehyde intermediate is consistent with the presence of the C-terminal reductive release domain. CitA collaborates with citS by catalyzing the hydrolysis of ACP-bound acyl intermediates to free the ACP from stalled intermediates. CitB then catalyzes the oxidation of the C-12 methyl of the ketone intermediate to an alcohol intermediate which is further oxidized by the oxidoreductase citC to produce a bisaldehyde intermediate. The fourth catalytic step is catalyzed by the citD aldehyde dehydrogenase. The final transformation is the reduction of C-3 by citE to provide the chemically stable citrinin nucleus. CitE appears highly selective for its substrate as its presence in any context other than a full complement of citS and citA-D does not result in observable new compounds. The polypeptide is Esterase citA (Monascus ruber (Mold)).